The sequence spans 342 residues: MFSPIGKVAQPYFCSFLLSTILGFVIAPRTIAALKNIQKGRNPVRSCFPAAHLAKKSGIPSMGGVIILLPCILSTAIFGDLHDRDIWVILTTMVAFAILGGVDDYLKFTRQNPQGISLEAKLFAQLLIASAALIFLSYTSDSFTSTHIFSKGLIDLGWAYMPFAYIVVVGSSNSVNLTDGLDGLATLPIITSTAILGIIGHLSLQFGAEPPGVVGANIPIFCSALVGSALSFLWFNAHPAQVFMGDLGSLSLGASLGLMSVMLKCEFIYAISGCIFVAEAISSMAQVAYCKLTKGRKIFLVAPIHHHFEKAGLKEATIVTRAWVIAMVSFVVSLAAIIYIYR.

Helical transmembrane passes span 8-28 (VAQP…VIAP), 58-78 (GIPS…TAIF), 86-106 (IWVI…DDYL), 116-136 (ISLE…LIFL), 152-172 (GLID…VGSS), 184-204 (LATL…HLSL), 213-233 (VVGA…LSFL), 242-262 (VFMG…MSVM), 267-287 (FIYA…MAQV), and 318-338 (IVTR…AAII).

The protein belongs to the glycosyltransferase 4 family. MraY subfamily. Mg(2+) serves as cofactor.

Its subcellular location is the cell inner membrane. The catalysed reaction is UDP-N-acetyl-alpha-D-muramoyl-L-alanyl-gamma-D-glutamyl-meso-2,6-diaminopimeloyl-D-alanyl-D-alanine + di-trans,octa-cis-undecaprenyl phosphate = di-trans,octa-cis-undecaprenyl diphospho-N-acetyl-alpha-D-muramoyl-L-alanyl-D-glutamyl-meso-2,6-diaminopimeloyl-D-alanyl-D-alanine + UMP. It functions in the pathway cell wall biogenesis; peptidoglycan biosynthesis. Catalyzes the initial step of the lipid cycle reactions in the biosynthesis of the cell wall peptidoglycan: transfers peptidoglycan precursor phospho-MurNAc-pentapeptide from UDP-MurNAc-pentapeptide onto the lipid carrier undecaprenyl phosphate, yielding undecaprenyl-pyrophosphoryl-MurNAc-pentapeptide, known as lipid I. The chain is Phospho-N-acetylmuramoyl-pentapeptide-transferase from Anaplasma marginale (strain Florida).